A 195-amino-acid chain; its full sequence is PRELI domain containing protein 3B (195 aa).

Positions 1-172 (MKIWTSEHVF…VIHKLNAEIE (172 aa)) constitute a PRELI/MSF1 domain. A phosphoserine mark is found at serine 46 and serine 51.

This sequence belongs to the slowmo family.

The protein is PRELI domain containing protein 3B (PRELID3B) of Cricetulus griseus (Chinese hamster).